We begin with the raw amino-acid sequence, 416 residues long: Phosphatidylinositol 5-phosphate 4-kinase type-2 beta (416 aa).

The residue at position 2 (serine 2) is an N-acetylserine. Residue threonine 8 is modified to Phosphothreonine. Phosphoserine is present on serine 19. In terms of domain architecture, PIPK spans 38 to 415 (ASEPILSVLM…RFNEFMSNIL (378 aa)). The interval 64 to 70 (VMLMPDD) is required for interaction with PIP5K1A. 2 positions are modified to N6-acetyllysine: lysine 94 and lysine 150. Residues 202 to 204 (RNV) and lysine 214 contribute to the ATP site. Residues 203–204 (NV) and lysine 214 contribute to the GTP site. Threonine 322 is modified (phosphothreonine). Phosphoserine is present on serine 326. Aspartate 369 provides a ligand contact to GTP.

As to quaternary structure, homodimer. Binds TNFRSF1A. Interacts with PIP4K2A; the interaction suppresses ubiquitination by the SPOP/CUL3 complex. In terms of processing, ubiquitinated by the SPOP/CUL3 complex. Ubiquitination is stimulated by PtdIns5P levels. Post-translationally, phosphorylated on serine residues. As to expression, highly expressed in brain, heart, pancreas, skeletal muscle and kidney. Detected at lower levels in placenta, lung and liver.

The protein resides in the endoplasmic reticulum membrane. It is found in the cell membrane. Its subcellular location is the nucleus. The protein localises to the cytoplasm. The enzyme catalyses a 1,2-diacyl-sn-glycero-3-phospho-(1D-myo-inositol-5-phosphate) + ATP = a 1,2-diacyl-sn-glycero-3-phospho-(1D-myo-inositol-4,5-bisphosphate) + ADP + H(+). The catalysed reaction is 1,2-dihexadecanoyl-sn-glycero-3-phospho-(1D-myo-inositol-5-phosphate) + ATP = 1,2-dihexadecanoyl-sn-glycero-3-phospho-(1D-myo-inositol-4,5-bisphosphate) + ADP + H(+). It carries out the reaction 1,2-dihexadecanoyl-sn-glycero-3-phospho-(1D-myo-inositol-5-phosphate) + GTP = 1,2-dihexadecanoyl-sn-glycero-3-phospho-(1D-myo-inositol-4,5-bisphosphate) + GDP + H(+). Functionally, participates in the biosynthesis of phosphatidylinositol 4,5-bisphosphate. Preferentially utilizes GTP, rather than ATP, for PI(5)P phosphorylation and its activity reflects changes in direct proportion to the physiological GTP concentration. Its GTP-sensing activity is critical for metabolic adaptation. PIP4Ks negatively regulate insulin signaling through a catalytic-independent mechanism. They interact with PIP5Ks and suppress PIP5K-mediated PtdIns(4,5)P2 synthesis and insulin-dependent conversion to PtdIns(3,4,5)P3. This Homo sapiens (Human) protein is Phosphatidylinositol 5-phosphate 4-kinase type-2 beta.